A 406-amino-acid chain; its full sequence is D-alanyl-D-alanine carboxypeptidase (406 aa).

An N-terminal signal peptide occupies residues 1–31; the sequence is MVSGTVGRGTALGAVLLALLAVPAQAGTAAA. Ser93 acts as the Acyl-ester intermediate in catalysis. Residues 151-154, 190-192, Arg316, 330-332, and 357-358 each bind substrate; these read FAQT, YSN, TGT, and SN. A propeptide spanning residues 381–406 is cleaved from the precursor; that stretch reads AKLRSATSSATTVERHEDIAPGIARD. A disordered region spans residues 387–406; the sequence is TSSATTVERHEDIAPGIARD. The span at 393-406 shows a compositional bias: basic and acidic residues; sequence VERHEDIAPGIARD.

The protein belongs to the peptidase S12 family.

The protein resides in the secreted. The enzyme catalyses Preferential cleavage: (Ac)2-L-Lys-D-Ala-|-D-Ala. Also transpeptidation of peptidyl-alanyl moieties that are N-acyl substituents of D-alanine.. It participates in cell wall biogenesis; peptidoglycan biosynthesis. Its function is as follows. Catalyzes distinct carboxypeptidation and transpeptidation reactions during the last stages of wall peptidoglycan synthesis. Mistaking a beta-lactam antibiotic molecule for a normal substrate (i.e. a D-alanyl-D-alanine-terminated peptide), it becomes immobilized in the form of a long-lived, serine-ester-linked acyl enzyme and thus behave as penicillin-binding protein (PBP). In Streptomyces sp. (strain R61), this protein is D-alanyl-D-alanine carboxypeptidase.